A 233-amino-acid chain; its full sequence is LEAVSHASDTHYGYGDSAAKEIGGDVLKHAEMVHTGLKEYKDVDKXGPVAKELSGLPSGPSAGSGPPPSALFAQIHQGESITHALKHVADDEKTHKNPADKAQSGPVRXGPKPFSASKPGISPSPKPVTKKWRXENXENVSNLVIDDTELKSVNSTLQIKXXINSISVDNYKVPXISINKXDGRHIYLSKNSLDCEIVSAKSSEMNVLIPTEGGDFNEFPVPEQXKXIWNGQK.

A Phosphotyrosine modification is found at Tyr-14. At Ser-17 the chain carries Phosphoserine. 2 disordered regions span residues 43–71 and 91–129; these read VDKXGPVAKELSGLPSGPSAGSGPPPSAL and DEKTHKNPADKAQSGPVRXGPKPFSASKPGISPSPKPVT. Over residues 53 to 64 the composition is skewed to low complexity; it reads LSGLPSGPSAGS. Lys-101 is subject to N6-methyllysine. Phosphoserine occurs at positions 104, 115, 122, and 124. Lys-151 participates in a covalent cross-link: Glycyl lysine isopeptide (Lys-Gly) (interchain with G-Cter in SUMO1). Residues 173 to 221 enclose the C-CAP/cofactor C-like domain; that stretch reads VPXISINKXDGRHIYLSKNSLDCEIVSAKSSEMNVLIPTEGGDFNEFPV.

The protein belongs to the CAP family. In terms of assembly, homodimer. Binds actin monomers.

The protein resides in the cell membrane. Directly regulates filament dynamics and has been implicated in a number of complex developmental and morphological processes, including mRNA localization and the establishment of cell polarity. This chain is Adenylyl cyclase-associated protein 1 (CAP1), found in Sus scrofa (Pig).